We begin with the raw amino-acid sequence, 247 residues long: Adenosylcobinamide-GDP ribazoletransferase (247 aa).

A run of 6 helical transmembrane segments spans residues 34-54 (IVMFPFIGLILGGVSGLIFIL), 59-79 (CGIPLAALFCILALALLTGGF), 113-133 (GGLALIFVLLAKILVVSELAL), 138-158 (MLAALAAACAAGRGSAVLLMY), 171-191 (VFIGKVSGRQTCITLGLAVIV), and 194-214 (VLLPGMQGLAAMVVTLAAIFI).

The protein belongs to the CobS family. It depends on Mg(2+) as a cofactor.

Its subcellular location is the cell inner membrane. It carries out the reaction alpha-ribazole + adenosylcob(III)inamide-GDP = adenosylcob(III)alamin + GMP + H(+). It catalyses the reaction alpha-ribazole 5'-phosphate + adenosylcob(III)inamide-GDP = adenosylcob(III)alamin 5'-phosphate + GMP + H(+). The protein operates within cofactor biosynthesis; adenosylcobalamin biosynthesis; adenosylcobalamin from cob(II)yrinate a,c-diamide: step 7/7. Functionally, joins adenosylcobinamide-GDP and alpha-ribazole to generate adenosylcobalamin (Ado-cobalamin). Also synthesizes adenosylcobalamin 5'-phosphate from adenosylcobinamide-GDP and alpha-ribazole 5'-phosphate. This chain is Adenosylcobinamide-GDP ribazoletransferase, found in Salmonella schwarzengrund (strain CVM19633).